A 359-amino-acid polypeptide reads, in one-letter code: Ornithine cyclodeaminase (359 aa).

Arg53 and Lys77 together coordinate L-ornithine. Residues Thr92, Arg120, 147 to 148 (AQ), Asp169, Thr209, 232 to 235 (VGGD), Lys239, and Ser300 contribute to the NAD(+) site. Residue Arg120 coordinates L-ornithine. Asp235 is a binding site for L-ornithine. Asp235 (proton donor/acceptor) is an active-site residue. Val301 provides a ligand contact to L-ornithine.

It belongs to the ornithine cyclodeaminase/mu-crystallin family. NAD(+) is required as a cofactor.

The catalysed reaction is L-ornithine = L-proline + NH4(+). The protein operates within amino-acid biosynthesis; L-proline biosynthesis; L-proline from L-ornithine: step 1/1. Catalyzes the conversion of L-ornithine into L-proline with release of ammonia. The chain is Ornithine cyclodeaminase from Brucella melitensis biotype 1 (strain ATCC 23456 / CCUG 17765 / NCTC 10094 / 16M).